Reading from the N-terminus, the 126-residue chain is Ribosome-binding factor A (126 aa).

This sequence belongs to the RbfA family. As to quaternary structure, monomer. Binds 30S ribosomal subunits, but not 50S ribosomal subunits or 70S ribosomes.

It is found in the cytoplasm. Functionally, one of several proteins that assist in the late maturation steps of the functional core of the 30S ribosomal subunit. Associates with free 30S ribosomal subunits (but not with 30S subunits that are part of 70S ribosomes or polysomes). Required for efficient processing of 16S rRNA. May interact with the 5'-terminal helix region of 16S rRNA. In Haemophilus ducreyi (strain 35000HP / ATCC 700724), this protein is Ribosome-binding factor A.